Reading from the N-terminus, the 511-residue chain is Sodium/proline symporter (511 aa).

13 helical membrane passes run 16–36, 53–73, 84–104, 138–158, 173–193, 199–219, 239–259, 285–305, 326–346, 380–400, 409–429, 437–457, and 466–486; these read WQTY…AFTY, IGPY…WMIM, LSAM…YFVV, IISG…GFVS, FGLI…GYLA, FFQG…AMMN, LFKG…LGYF, ISWM…GIAF, VLFH…AIMS, FVMI…AIAW, LVGN…LFAL, AGAV…IAWI, and IFGL…TYVV.

This sequence belongs to the sodium:solute symporter (SSF) (TC 2.A.21) family.

Its subcellular location is the cell membrane. The enzyme catalyses L-proline(in) + Na(+)(in) = L-proline(out) + Na(+)(out). Functionally, catalyzes the sodium-dependent uptake of extracellular L-proline. Since most S.aureus strains are L-proline auxotrophs, this transporter may aid the bacterial persistence during an infection of tissues with low proline concentrations. The sequence is that of Sodium/proline symporter from Staphylococcus aureus.